Reading from the N-terminus, the 394-residue chain is ATP phosphoribosyltransferase regulatory subunit (394 aa).

Belongs to the class-II aminoacyl-tRNA synthetase family. HisZ subfamily. In terms of assembly, heteromultimer composed of HisG and HisZ subunits.

The protein resides in the cytoplasm. It participates in amino-acid biosynthesis; L-histidine biosynthesis; L-histidine from 5-phospho-alpha-D-ribose 1-diphosphate: step 1/9. In terms of biological role, required for the first step of histidine biosynthesis. May allow the feedback regulation of ATP phosphoribosyltransferase activity by histidine. The protein is ATP phosphoribosyltransferase regulatory subunit of Pseudomonas paraeruginosa (strain DSM 24068 / PA7) (Pseudomonas aeruginosa (strain PA7)).